The sequence spans 295 residues: Probable aspartoacylase (295 aa).

The Zn(2+) site is built by histidine 13 and glutamate 16. Residues arginine 54 and 61–62 (NR) contribute to the substrate site. A Zn(2+)-binding site is contributed by histidine 100. The substrate site is built by glutamate 158 and tyrosine 268.

Belongs to the AspA/AstE family. Aspartoacylase subfamily. The cofactor is Zn(2+).

The catalysed reaction is an N-acyl-L-aspartate + H2O = a carboxylate + L-aspartate. The chain is Probable aspartoacylase from Prochlorococcus marinus subsp. pastoris (strain CCMP1986 / NIES-2087 / MED4).